The chain runs to 334 residues: D-alanine--D-alanine ligase (334 aa).

Residues 114–314 (KRIWRFEGLP…YEELCLRILA (201 aa)) enclose the ATP-grasp domain. ATP is bound at residue 140–195 (LEDLGSPMIVKPSREGSTIGLTKVTSPGQCEQAYRLASRYDPEVLCEQFIEGEETT). Residues aspartate 267, glutamate 281, and asparagine 283 each coordinate Mg(2+).

This sequence belongs to the D-alanine--D-alanine ligase family. Mg(2+) serves as cofactor. Mn(2+) is required as a cofactor.

The protein resides in the cytoplasm. It catalyses the reaction 2 D-alanine + ATP = D-alanyl-D-alanine + ADP + phosphate + H(+). Its pathway is cell wall biogenesis; peptidoglycan biosynthesis. Cell wall formation. In Paracidovorax citrulli (strain AAC00-1) (Acidovorax citrulli), this protein is D-alanine--D-alanine ligase.